A 314-amino-acid chain; its full sequence is Deoxymugineic acid synthase 1-B (314 aa).

The interval 1 to 22 (MGAGDKTAAGMPRIGMGTAVQG) is disordered. Position 44 (D44) interacts with NADP(+). Residue Y49 is the Proton donor of the active site. Residue H112 coordinates substrate. Residues 158-159 (AN), Q180, 258-266 (FDEARMREN), and 273-281 (ELTEEERRR) contribute to the NADP(+) site.

Belongs to the aldo/keto reductase family. In terms of tissue distribution, mostly expressed in root tissues, observed in mesocotyl and embryonic roots, seedling roots, crown and seedling leafes, mature bracts, anthers, pistil, caryopsis and embryos.

The catalysed reaction is 2'-deoxymugineate + NAD(+) = 3''-deamino-3''-oxonicotianamine + NADH + H(+). It carries out the reaction 2'-deoxymugineate + NADP(+) = 3''-deamino-3''-oxonicotianamine + NADPH + H(+). The protein operates within siderophore biosynthesis. Functionally, catalyzes the reduction of a 3''-keto intermediate during the biosynthesis of 2'-deoxymugineic acid (DMA) from L-Met. Involved in the formation of phytosiderophores (MAs) belonging to the mugineic acid family and required to acquire iron. In Triticum aestivum (Wheat), this protein is Deoxymugineic acid synthase 1-B.